The sequence spans 151 residues: Ubiquitin-conjugating enzyme E2 N (151 aa).

Positions 3–149 (SLPRRIIKET…AREWTQKYAV (147 aa)) constitute a UBC core domain. Cys-87 functions as the Glycyl thioester intermediate in the catalytic mechanism.

This sequence belongs to the ubiquitin-conjugating enzyme family.

The catalysed reaction is S-ubiquitinyl-[E1 ubiquitin-activating enzyme]-L-cysteine + [E2 ubiquitin-conjugating enzyme]-L-cysteine = [E1 ubiquitin-activating enzyme]-L-cysteine + S-ubiquitinyl-[E2 ubiquitin-conjugating enzyme]-L-cysteine.. The protein operates within protein modification; protein ubiquitination. In terms of biological role, catalyzes the covalent attachment of ubiquitin to other proteins. This chain is Ubiquitin-conjugating enzyme E2 N (ben), found in Drosophila melanogaster (Fruit fly).